Here is a 156-residue protein sequence, read N- to C-terminus: 6,7-dimethyl-8-ribityllumazine synthase (156 aa).

5-amino-6-(D-ribitylamino)uracil is bound by residues Phe23, 57–59 (AYE), and 81–83 (AII). 86–87 (GT) provides a ligand contact to (2S)-2-hydroxy-3-oxobutyl phosphate. His89 functions as the Proton donor in the catalytic mechanism. Phe114 is a binding site for 5-amino-6-(D-ribitylamino)uracil. Arg128 is a (2S)-2-hydroxy-3-oxobutyl phosphate binding site.

This sequence belongs to the DMRL synthase family.

It catalyses the reaction (2S)-2-hydroxy-3-oxobutyl phosphate + 5-amino-6-(D-ribitylamino)uracil = 6,7-dimethyl-8-(1-D-ribityl)lumazine + phosphate + 2 H2O + H(+). It functions in the pathway cofactor biosynthesis; riboflavin biosynthesis; riboflavin from 2-hydroxy-3-oxobutyl phosphate and 5-amino-6-(D-ribitylamino)uracil: step 1/2. Its function is as follows. Catalyzes the formation of 6,7-dimethyl-8-ribityllumazine by condensation of 5-amino-6-(D-ribitylamino)uracil with 3,4-dihydroxy-2-butanone 4-phosphate. This is the penultimate step in the biosynthesis of riboflavin. The chain is 6,7-dimethyl-8-ribityllumazine synthase from Helicobacter pylori (strain G27).